Reading from the N-terminus, the 371-residue chain is Leucine-rich repeat-containing protein 2 (371 aa).

9 LRR repeats span residues 122–143 (HLREWYISNTLIQIIPTYIQLF), 145–166 (AMRILDLPKNQISHLPAEIGCL), 168–189 (NLKELNVGFNYLKSIPPELGDC), 191–214 (NLERLDCSGNLELMELPFELSNLK), 215–235 (QVTFVDISANKFSSVPICVLR), 238–260 (NLQWLDISSNNLTDLPQDIDRLE), 261–283 (ELQSFLLYKNKLTYLPYSMLNLK), 284–305 (KLTLLVVSGDHLVELPTALCDS), and 308–329 (PLKFVSLMDNPIDNAQCEDGNE).

This chain is Leucine-rich repeat-containing protein 2 (LRRC2), found in Homo sapiens (Human).